A 193-amino-acid polypeptide reads, in one-letter code: uncharacterized protein (193 aa).

Residues 1-22 (MAVQKNVIKGILAGTFALMLSG) form the signal peptide. Cys23 is lipidated: N-palmitoyl cysteine. Cys23 carries the S-diacylglycerol cysteine lipid modification.

Its subcellular location is the cell membrane. This is an uncharacterized protein from Escherichia coli (strain K12).